The sequence spans 519 residues: Methionine--tRNA ligase (519 aa).

A 'HIGH' region motif is present at residues 11-21 (AYPNAAPHVGH). Positions 299–303 (KMSKS) match the 'KMSKS' region motif. Lys302 contributes to the ATP binding site. The tract at residues 500 to 519 (LPPPTGVFPRYQPPQPPEGK) is disordered.

This sequence belongs to the class-I aminoacyl-tRNA synthetase family. MetG type 2B subfamily. Monomer.

The protein localises to the cytoplasm. It carries out the reaction tRNA(Met) + L-methionine + ATP = L-methionyl-tRNA(Met) + AMP + diphosphate. Its function is as follows. Is required not only for elongation of protein synthesis but also for the initiation of all mRNA translation through initiator tRNA(fMet) aminoacylation. This is Methionine--tRNA ligase (metG) from Mycobacterium tuberculosis (strain CDC 1551 / Oshkosh).